The sequence spans 33 residues: Cysteine-rich venom protein tripurin (33 aa).

It belongs to the CRISP family. Post-translationally, contains 8 disulfide bonds. As to expression, expressed by the venom gland.

The protein resides in the secreted. Blocks contraction of smooth muscle elicited by high potassium-induced depolarization, but does not block caffeine-stimulated contraction. May target voltage-gated calcium channels on smooth muscle. This is Cysteine-rich venom protein tripurin from Trimeresurus purpureomaculatus (Mangrove pit viper).